The primary structure comprises 266 residues: MDNRPIGVLDSGLGGLTVLKKVIEKMPNESTIFIGDQANMPYGDRSREEIISLTRDSVNFLLSKDVKIIIFGCNTATAVAMATIQKEIPLQIIGVVQSGALAAARTTETKNVAVIGTKATVASHSYLKEIQYRDPEIKVSEFAQPKLAPLAEEDPDEDTKNAVVSESLTPLKNADYDTLVLGCTHYPLLRDEIVAVVGQDKKIVDPADQVAQYTYNVLRRDDLFAESTAPVKHDYYTTGEAKKFTEITRQWMNDDTIVGHHVDAED.

Residues 10-11 (DS) and 42-43 (YG) contribute to the substrate site. The active-site Proton donor/acceptor is Cys-73. 74–75 (NT) is a substrate binding site. The active-site Proton donor/acceptor is Cys-183. 184–185 (TH) contributes to the substrate binding site.

This sequence belongs to the aspartate/glutamate racemases family.

It carries out the reaction L-glutamate = D-glutamate. It participates in cell wall biogenesis; peptidoglycan biosynthesis. Provides the (R)-glutamate required for cell wall biosynthesis. In Lactobacillus johnsonii (strain CNCM I-12250 / La1 / NCC 533), this protein is Glutamate racemase.